The following is a 582-amino-acid chain: Vesicular glutamate transporter 2 (582 aa).

Residues 1–71 are Cytoplasmic-facing; sequence MESVKQRILT…CTCFGLPRRY (71 aa). The helical transmembrane segment at 72-92 threads the bilayer; it reads IIAIMSGLGFCISFGIRCNLG. The Vesicular segment spans residues 93-125; sequence VAIVDMVNNSTIHRGGKVIKEKAKFNWDPETVG. 2 N-linked (GlcNAc...) asparagine glycosylation sites follow: Asn-100 and Asn-101. The chain crosses the membrane as a helical span at residues 126–146; that stretch reads MIHGSFFWGYIITQIPGGYIA. Over 147-148 the chain is Cytoplasmic; that stretch reads SR. Residues 149 to 169 form a helical membrane-spanning segment; sequence LAANRVFGAAILLTSTLNMLI. At 170 to 177 the chain is on the vesicular side; sequence PSAARVHY. The chain crosses the membrane as a helical span at residues 178 to 198; that stretch reads GCVIFVRILQGLVEGVTYPAC. Residues 199-216 are Cytoplasmic-facing; that stretch reads HGIWSKWAPPLERSRLAT. The chain crosses the membrane as a helical span at residues 217–237; sequence TSFCGSYAGAVIAMPLAGILV. Over 238–244 the chain is Vesicular; it reads QYTGWSS. Residues 245 to 265 form a helical membrane-spanning segment; it reads VFYVYGSFGMIWYMFWLLVSY. Topologically, residues 266–310 are cytoplasmic; it reads ESPAKHPTITDEERRYIEESIGESANLLGAMEKFKTPWRKFFTSM. The chain crosses the membrane as a helical span at residues 311 to 331; that stretch reads PVYAIIVANFCRSWTFYLLLI. Topologically, residues 332-349 are vesicular; sequence SQPAYFEEVFGFEISKVG. A helical membrane pass occupies residues 350 to 370; that stretch reads MLSAVPHLVMTIIVPIGGQIA. Residues 371–386 lie on the Cytoplasmic side of the membrane; it reads DFLRSKQILSTTTVRK. A helical membrane pass occupies residues 387-407; sequence IMNCGGFGMEATLLLVVGYSH. The Vesicular portion of the chain corresponds to 408-409; sequence TR. The chain crosses the membrane as a helical span at residues 410-430; that stretch reads GVAISFLVLAVGFSGFAISGF. Over 431–443 the chain is Cytoplasmic; it reads NVNHLDIAPRYAS. Residues 444-464 traverse the membrane as a helical segment; that stretch reads ILMGISNGVGTLSGMVCPIIV. Over 465 to 477 the chain is Vesicular; that stretch reads GAMTKNKSREEWQ. An N-linked (GlcNAc...) asparagine glycan is attached at Asn-470. The helical transmembrane segment at 478–498 threads the bilayer; that stretch reads YVFLIAALVHYGGVIFYAIFA. Residues 499-582 lie on the Cytoplasmic side of the membrane; that stretch reads SGEKQPWADP…YNYKDRDDYS (84 aa).

The protein belongs to the major facilitator superfamily. Sodium/anion cotransporter family. VGLUT subfamily.

It localises to the cytoplasmic vesicle. The protein localises to the secretory vesicle. Its subcellular location is the synaptic vesicle membrane. The protein resides in the synapse. It is found in the synaptosome. It localises to the cell membrane. The catalysed reaction is L-glutamate(out) = L-glutamate(in). It carries out the reaction 3 Na(+)(out) + phosphate(out) = 3 Na(+)(in) + phosphate(in). It catalyses the reaction phosphate(in) = phosphate(out). The enzyme catalyses K(+)(in) + H(+)(out) = K(+)(out) + H(+)(in). The catalysed reaction is chloride(in) = chloride(out). Its activity is regulated as follows. Chloride channel activity is allosterically activated by lumenal H(+) and Cl(-) leading to synaptic vesicles acidification. The L-glutamate transport activity is allosterically activated by lumenal H(+) and Cl(-). The allosteric requirement for H(+) efficiently prevents non-vesicular efflux across the plasma membrane. The L-glutamate uniporter activity exhibits a biphasic dependence on chloride concentration. Functionally, multifunctional transporter that transports L-glutamate as well as multiple ions such as chloride, proton, potassium, sodium and phosphate. At the synaptic vesicle membrane, mainly functions as a uniporter which transports preferentially L-glutamate but also, phosphate from the cytoplasm into synaptic vesicles at presynaptic nerve terminals of excitatory neural cells. The L-glutamate or phosphate uniporter activity is electrogenic and is driven by the proton electrochemical gradient, mainly by the electrical gradient established by the vacuolar H(+)-ATPase across the synaptic vesicle membrane. In addition, functions as a chloride channel that allows a chloride permeation through the synaptic vesicle membrane therefore affects the proton electrochemical gradient and promotes synaptic vesicles acidification. Moreover, functions as a vesicular K(+)/H(+) antiport allowing to maintain the electrical gradient and to decrease chemical gradient and therefore sustain vesicular L-glutamate uptake. The vesicular H(+)/H(+) antiport activity is electroneutral. At the plasma membrane, following exocytosis, functions as a symporter of Na(+) and phosphate from the extracellular space to the cytoplasm allowing synaptic phosphate homeostasis regulation. The symporter activity is driven by an inside negative membrane potential and is electrogenic. Also involved in the regulation of retinal hyaloid vessel regression during postnatal development. May also play a role in the endocrine L-glutamatergic system of other tissues such as pineal gland and pancreas. The sequence is that of Vesicular glutamate transporter 2 from Bos taurus (Bovine).